The following is a 712-amino-acid chain: MLRCAWQNGPRQSNRWLRHLSNQIWKRSYSSKIRNIGILAHIDAGKTTTTERMLFYAGKTRALGEVHRGNTVTDYLTQERERGITICSSAVTFPWNDHRINLLDTPGHIDFTMEVEQSLFAVDGVVVVLDGTAGVEAQTVTVWSQADKHKLPRLIFVNKMDRPDADFDKCVADLKDKLETQPVCLQYPVKNEDGVLAINDVITLERLSWHQKDLGRSYKNVKLEPSDDLRQLQEKRSELIDQLSGLDDELADVVISTESFDKVDNALIERALRRATTQQKVVPVLLGSAYKNVGIQRLMDAVNSYLPAPEERNQIYDCFGTEVAGKVFKIVHDKQRGPLTLIRILRGEIKRGMRLISARGQAEVVSKLYEPLADEYREVSAVQSGDVVICAGLKSTVTDEEDDELDESDELFAIDPQIPDAVYFCSIEPPSVSSQTAMEQALKQLQREDPSLRVSYDSVTGQTVLGGMGELHMDIIKSRILSEYKIDVDLGPLQIAYKETIESPALTTLSVEKEIAGSKQSVSITLEVVKNQAEMFSLDKSPENLPNLNTLRPRILQVLRKGSISALERGPRVGGQVVETQIRLHNATIGRGTADSFVMATAAQCVQKLLSTSGTRLLEPIMALQIVAPSERISGIMADLSRRRALINDVLPKGERNKMILVNAPLAELSGYSSALRTISSGTASMTMQPCGFSSMNSVDESLAERRAQGLE.

A mitochondrion-targeting transit peptide spans 1-29; that stretch reads MLRCAWQNGPRQSNRWLRHLSNQIWKRSY. Residues 31-310 enclose the tr-type G domain; it reads SKIRNIGILA…AVNSYLPAPE (280 aa). GTP is bound by residues 40–47, 104–108, and 158–161; these read AHIDAGKT, DTPGH, and NKMD.

It belongs to the TRAFAC class translation factor GTPase superfamily. Classic translation factor GTPase family. EF-G/EF-2 subfamily.

It is found in the mitochondrion. Its function is as follows. Mitochondrial GTPase that mediates the disassembly of ribosomes from messenger RNA at the termination of mitochondrial protein biosynthesis. Not involved in the GTP-dependent ribosomal translocation step during translation elongation. The chain is Ribosome-releasing factor 2, mitochondrial from Drosophila yakuba (Fruit fly).